The sequence spans 155 residues: Endoribonuclease YbeY (155 aa).

Zn(2+)-binding residues include His-114, His-118, and His-124.

The protein belongs to the endoribonuclease YbeY family. Requires Zn(2+) as cofactor.

It localises to the cytoplasm. Its function is as follows. Single strand-specific metallo-endoribonuclease involved in late-stage 70S ribosome quality control and in maturation of the 3' terminus of the 16S rRNA. The polypeptide is Endoribonuclease YbeY (Shigella dysenteriae serotype 1 (strain Sd197)).